The chain runs to 241 residues: Small ribosomal subunit protein uS2 (241 aa).

This sequence belongs to the universal ribosomal protein uS2 family.

This chain is Small ribosomal subunit protein uS2, found in Salmonella agona (strain SL483).